Reading from the N-terminus, the 271-residue chain is Zinc-finger homeodomain protein 8 (271 aa).

Ser16 carries the post-translational modification Phosphoserine. A ZF-HD dimerization-type; degenerate zinc finger spans residues 56–107 (YKECLKNHAAGIGGHALDGCGEFMPSPSFNSNDPASLTCAACGCHRNFHRRE). The tract at residues 125–154 (HNRHQLPPPPPPHLAGIRSPDDDDSASPPP) is disordered. A DNA-binding region (homeobox) is located at residues 179 to 242 (RKRFRTKFSQ…NNKISGRSGA (64 aa)).

As to quaternary structure, homo- and heterodimer with other ZFHD proteins. Interacts with MIF1, MIF2 and MIF3; these interactions prevent nuclear localization and DNA-binding to inhibit transcription regulation activity. Binds to ZHD1, ZHD2, ZHD4, ZHD10 and ZHD11. Interacts with HIPP30. Mostly expressed in flowers and inflorescence.

It is found in the nucleus. Functionally, putative transcription factor. The sequence is that of Zinc-finger homeodomain protein 8 (ZHD8) from Arabidopsis thaliana (Mouse-ear cress).